Reading from the N-terminus, the 250-residue chain is ATP synthase subunit a (250 aa).

A run of 6 helical transmembrane segments spans residues 26-46 (FTNA…FLYL), 84-104 (FFPM…LGMF), 114-134 (IIVT…YGFY), 143-163 (LFVP…IEVI), 193-213 (FVAS…LPLI), and 216-236 (VALT…FAVL).

It belongs to the ATPase A chain family. F-type ATPases have 2 components, CF(1) - the catalytic core - and CF(0) - the membrane proton channel. CF(1) has five subunits: alpha(3), beta(3), gamma(1), delta(1), epsilon(1). CF(0) has three main subunits: a(1), b(2) and c(9-12). The alpha and beta chains form an alternating ring which encloses part of the gamma chain. CF(1) is attached to CF(0) by a central stalk formed by the gamma and epsilon chains, while a peripheral stalk is formed by the delta and b chains.

The protein localises to the cell inner membrane. Key component of the proton channel; it plays a direct role in the translocation of protons across the membrane. This is ATP synthase subunit a from Sinorhizobium fredii (strain NBRC 101917 / NGR234).